The primary structure comprises 349 residues: Probable myosin light chain kinase DDB_G0275057 (349 aa).

The interval 1–33 (MGCFNSKEAGAGRPKTTTQQQQQATPEPTVTTA) is disordered. Over residues 16–33 (TTTQQQQQATPEPTVTTA) the composition is skewed to low complexity. A Protein kinase domain is found at 56–313 (YVVGKELGRG…AKQCLDDLWL (258 aa)). ATP contacts are provided by residues 62–70 (LGRGAFSVV) and Lys-85. Asp-178 (proton acceptor) is an active-site residue.

This sequence belongs to the protein kinase superfamily. CAMK Ser/Thr protein kinase family. CaMK subfamily.

It carries out the reaction L-seryl-[myosin light chain] + ATP = O-phospho-L-seryl-[myosin light chain] + ADP + H(+). It catalyses the reaction L-threonyl-[myosin light chain] + ATP = O-phospho-L-threonyl-[myosin light chain] + ADP + H(+). Does not have a calmodulin-binding domain. May phosphorylate a specific serine in the N-terminus of a myosin light chain. The polypeptide is Probable myosin light chain kinase DDB_G0275057 (Dictyostelium discoideum (Social amoeba)).